A 605-amino-acid chain; its full sequence is Formin-binding protein 1-like (605 aa).

Positions 1–263 (MSWGTELWDQ…AAKSVDERRD (263 aa)) constitute an F-BAR domain. Residues 66–258 (FTSCIAFFNI…EGMILAAKSV (193 aa)) are a coiled coil. Residues 245–535 (SKCLEGMILA…EFDDEFEDDD (291 aa)) form an interaction with CDC42 region. Serine 295 is subject to Phosphoserine. The interval 325–345 (FGKKPKPQSPPLTPTSLFTSS) is disordered. The stretch at 392-484 (LEDFSHLPPE…VEGKTGVRGD (93 aa)) forms a coiled coil. In terms of domain architecture, REM-1 spans 397–474 (HLPPEQRRKK…IHKNEAWLSE (78 aa)). The segment covering 480 to 490 (GVRGDRRHSSD) has biased composition (basic and acidic residues). Positions 480-539 (GVRGDRRHSSDINHLVTQGRESPEGSYTDDANQEVRGPPQQHGHHSEFDDEFEDDDPLPA) are disordered. A phosphoserine mark is found at serine 488, serine 501, and serine 505. Residues 522-605 (GHHSEFDDEF…VTLEKNSKGS (84 aa)) are interaction with DNM1. A compositionally biased stretch (acidic residues) spans 527–536 (FDDEFEDDDP). The SH3 domain maps to 538 to 599 (PAIGHCKAIY…PTTYIDVTLE (62 aa)). Residues 541-597 (GHCKAIYPFDGHNEGTLAMKEGEVLYIIEEDKGDGWTRARRQNGEEGYVPTTYIDVT) are interaction with DNM2 and WASL. Positions 541-605 (GHCKAIYPFD…VTLEKNSKGS (65 aa)) are interaction with DAAM1, DIAPH1 and DIAPH2.

Belongs to the FNBP1 family. Homodimerizes, the dimers can polymerize end-to-end to form filamentous structures. Interacts with GTP-bound CDC42. Interacts with DAAM1, DIAPH1, DIAPH2, DNM1, DNM2 and WASL/N-WASP. Interacts with ATG3. Interacts (via SH3 domain) with ABI1, WASF2, CDC42 and WIPF1. Isoform 1 is expressed in brain. Isoform 2 is expressed in brain, kidney and lung. Within the brain expression is seen in cortical neurons, hippocampal pyramidal neurons, hypothalamus and piriform cortex.

It localises to the cytoplasm. The protein localises to the cytoskeleton. It is found in the cell cortex. The protein resides in the cytoplasmic vesicle. Its subcellular location is the cell membrane. Its function is as follows. Required to coordinate membrane tubulation with reorganization of the actin cytoskeleton during endocytosis. May bind to lipids such as phosphatidylinositol 4,5-bisphosphate and phosphatidylserine and promote membrane invagination and the formation of tubules. Also promotes CDC42-induced actin polymerization by activating the WASL-WASPIP complex, the predominant form of WASL/N-WASP in cells. Actin polymerization may promote the fission of membrane tubules to form endocytic vesicles. Essential for autophagy of intracellular bacterial pathogens. May negatively regulate neurite extension and axon branching in developing neurons. This chain is Formin-binding protein 1-like (Fnbp1l), found in Rattus norvegicus (Rat).